A 62-amino-acid chain; its full sequence is Large ribosomal subunit protein uL30 (62 aa).

It belongs to the universal ribosomal protein uL30 family. Part of the 50S ribosomal subunit.

The protein is Large ribosomal subunit protein uL30 of Shouchella clausii (strain KSM-K16) (Alkalihalobacillus clausii).